Here is a 95-residue protein sequence, read N- to C-terminus: MKITREQVEHVARLARLELSEAELDTFTGQMDSILSYVEKLNALDTEGIVPTSHAVPMENAFRADEATGSIGVEAALANAPLRAESFFRVPKVIE.

The protein belongs to the GatC family. In terms of assembly, heterotrimer of A, B and C subunits.

The catalysed reaction is L-glutamyl-tRNA(Gln) + L-glutamine + ATP + H2O = L-glutaminyl-tRNA(Gln) + L-glutamate + ADP + phosphate + H(+). The enzyme catalyses L-aspartyl-tRNA(Asn) + L-glutamine + ATP + H2O = L-asparaginyl-tRNA(Asn) + L-glutamate + ADP + phosphate + 2 H(+). In terms of biological role, allows the formation of correctly charged Asn-tRNA(Asn) or Gln-tRNA(Gln) through the transamidation of misacylated Asp-tRNA(Asn) or Glu-tRNA(Gln) in organisms which lack either or both of asparaginyl-tRNA or glutaminyl-tRNA synthetases. The reaction takes place in the presence of glutamine and ATP through an activated phospho-Asp-tRNA(Asn) or phospho-Glu-tRNA(Gln). This chain is Aspartyl/glutamyl-tRNA(Asn/Gln) amidotransferase subunit C, found in Geobacter sp. (strain M21).